Here is a 952-residue protein sequence, read N- to C-terminus: Valine--tRNA ligase (952 aa).

Positions P45–H55 match the 'HIGH' region motif. A 'KMSKS' region motif is present at residues K571–S575. K574 serves as a coordination point for ATP. Residues K894–A950 adopt a coiled-coil conformation.

Belongs to the class-I aminoacyl-tRNA synthetase family. ValS type 1 subfamily. Monomer.

The protein localises to the cytoplasm. It carries out the reaction tRNA(Val) + L-valine + ATP = L-valyl-tRNA(Val) + AMP + diphosphate. Catalyzes the attachment of valine to tRNA(Val). As ValRS can inadvertently accommodate and process structurally similar amino acids such as threonine, to avoid such errors, it has a 'posttransfer' editing activity that hydrolyzes mischarged Thr-tRNA(Val) in a tRNA-dependent manner. This Nitrobacter winogradskyi (strain ATCC 25391 / DSM 10237 / CIP 104748 / NCIMB 11846 / Nb-255) protein is Valine--tRNA ligase.